Consider the following 858-residue polypeptide: Phosphoenolpyruvate carboxylase (858 aa).

Active-site residues include H145 and K531.

This sequence belongs to the PEPCase type 1 family. Mg(2+) serves as cofactor.

It catalyses the reaction oxaloacetate + phosphate = phosphoenolpyruvate + hydrogencarbonate. Forms oxaloacetate, a four-carbon dicarboxylic acid source for the tricarboxylic acid cycle. This chain is Phosphoenolpyruvate carboxylase, found in Thermus thermophilus (strain ATCC BAA-163 / DSM 7039 / HB27).